A 162-amino-acid polypeptide reads, in one-letter code: Lipoprotein signal peptidase (162 aa).

The next 4 membrane-spanning stretches (helical) occupy residues 9 to 29 (LCLV…LVAT), 39 to 59 (VIHG…FGLF), 66 to 86 (VRKF…LWLY), and 95 to 115 (VLSF…IDRF). Residues D122 and D140 contribute to the active site. Residues 136 to 156 (FNVADSAITIGMVVFVYHVIF) traverse the membrane as a helical segment.

The protein belongs to the peptidase A8 family.

The protein localises to the cell inner membrane. The catalysed reaction is Release of signal peptides from bacterial membrane prolipoproteins. Hydrolyzes -Xaa-Yaa-Zaa-|-(S,diacylglyceryl)Cys-, in which Xaa is hydrophobic (preferably Leu), and Yaa (Ala or Ser) and Zaa (Gly or Ala) have small, neutral side chains.. It functions in the pathway protein modification; lipoprotein biosynthesis (signal peptide cleavage). Its function is as follows. This protein specifically catalyzes the removal of signal peptides from prolipoproteins. This chain is Lipoprotein signal peptidase, found in Desulforapulum autotrophicum (strain ATCC 43914 / DSM 3382 / VKM B-1955 / HRM2) (Desulfobacterium autotrophicum).